The following is a 563-amino-acid chain: Probable Xaa-Pro aminopeptidase PEPP (563 aa).

Mn(2+)-binding residues include Asp-331, Asp-342, Glu-491, and Glu-532.

This sequence belongs to the peptidase M24B family. The cofactor is Mn(2+).

It carries out the reaction Release of any N-terminal amino acid, including proline, that is linked to proline, even from a dipeptide or tripeptide.. Functionally, catalyzes the removal of a penultimate prolyl residue from the N-termini of peptides. The sequence is that of Probable Xaa-Pro aminopeptidase PEPP (PEPP) from Verticillium alfalfae (strain VaMs.102 / ATCC MYA-4576 / FGSC 10136) (Verticillium wilt of alfalfa).